The chain runs to 519 residues: Flavonoid 8-hydroxylase 2, chloroplastic (519 aa).

The N-terminal 46 residues, M1–F46, are a transit peptide targeting the chloroplast. Positions W77–F188 constitute a Rieske domain. [2Fe-2S] cluster contacts are provided by C119, H121, C139, and H142. Residues H241 and H246 each contribute to the Fe cation site. Positions C447 to C450 match the Redox-active motif motif. 2 helical membrane-spanning segments follow: residues I462 to V478 and Y485 to L501.

Requires [2Fe-2S] cluster as cofactor. In terms of tissue distribution, glandular trichome-specific expression in leaves.

The protein resides in the plastid. It is found in the chloroplast membrane. The protein localises to the cytoplasm. It catalyses the reaction salvigenin + 2 reduced [2Fe-2S]-[ferredoxin] + O2 + 2 H(+) = 8-hydroxysalvigenin + 2 oxidized [2Fe-2S]-[ferredoxin] + H2O. Its pathway is flavonoid metabolism. In terms of biological role, rieske-type, PAO-family oxygenase involved in the biosynthesis of polymethoxylated flavonoids natural products such as nevadensin and salvigenin, aroma compounds which contribute to the flavor of sweet basil, and exhibit pharmacological activities such as anti-allergic, anti-oxidant, antibacterial, anti-proliferative, and anti-inflammatory effects. Catalyzes the hydroxylation of salvigenin to produce 8-hydroxysalvigenin (8-OH-SALV). This chain is Flavonoid 8-hydroxylase 2, chloroplastic, found in Ocimum basilicum (Sweet basil).